The primary structure comprises 402 residues: Multidrug resistance protein MdtH (402 aa).

The Cytoplasmic segment spans residues Met-1–Lys-12. Residues Tyr-13–Ile-33 form a helical membrane-spanning segment. At Ser-34–Glu-98 the chain is on the periplasmic side. Residues Pro-99 to Phe-116 traverse the membrane as a helical segment. The Cytoplasmic segment spans residues Asp-117–Ser-138. A helical transmembrane segment spans residues Leu-139–Leu-159. Residues Gln-160–Arg-164 lie on the Periplasmic side of the membrane. A helical transmembrane segment spans residues Leu-165–Leu-185. At Pro-186 to Tyr-213 the chain is on the cytoplasmic side. A helical membrane pass occupies residues Val-214–Met-234. At Val-235 to Ser-243 the chain is on the periplasmic side. Residues Ala-244–Ala-264 form a helical membrane-spanning segment. The Cytoplasmic portion of the chain corresponds to Arg-265 to Arg-276. A helical transmembrane segment spans residues Leu-277–Leu-297. Over Gln-298–Gln-299 the chain is Periplasmic. A helical transmembrane segment spans residues Leu-300–Thr-320. The Cytoplasmic portion of the chain corresponds to Leu-321–Arg-339. The chain crosses the membrane as a helical span at residues Leu-340–Gly-360. The Periplasmic segment spans residues Lys-361–Glu-367. A helical membrane pass occupies residues Leu-368–Phe-388. The Cytoplasmic segment spans residues Ser-389–Ala-402.

The protein belongs to the major facilitator superfamily. DHA1 family. MdtH (TC 2.A.1.2.21) subfamily.

It is found in the cell inner membrane. The protein is Multidrug resistance protein MdtH of Shigella flexneri serotype 5b (strain 8401).